The following is a 168-amino-acid chain: Large ribosomal subunit protein uL10 (168 aa).

It belongs to the universal ribosomal protein uL10 family. As to quaternary structure, part of the ribosomal stalk of the 50S ribosomal subunit. The N-terminus interacts with L11 and the large rRNA to form the base of the stalk. The C-terminus forms an elongated spine to which L12 dimers bind in a sequential fashion forming a multimeric L10(L12)X complex.

Its function is as follows. Forms part of the ribosomal stalk, playing a central role in the interaction of the ribosome with GTP-bound translation factors. The sequence is that of Large ribosomal subunit protein uL10 from Photorhabdus laumondii subsp. laumondii (strain DSM 15139 / CIP 105565 / TT01) (Photorhabdus luminescens subsp. laumondii).